Consider the following 1687-residue polypeptide: Muscle calcium channel subunit alpha-1 (1687 aa).

The interval Met-1–Gln-33 is disordered. Residues Met-1–Lys-61 are Cytoplasmic-facing. The span at Glu-9 to Lys-23 shows a compositional bias: polar residues. The stretch at Asn-48–Phe-330 is one I repeat. Residues Leu-62–Val-80 traverse the membrane as a helical segment. The Extracellular segment spans residues Tyr-81–Ile-99. N-linked (GlcNAc...) asparagine glycosylation is present at Asn-90. The chain crosses the membrane as a helical span at residues Glu-100–Ala-117. The Cytoplasmic segment spans residues Tyr-118–Asn-130. A helical transmembrane segment spans residues Gly-131–Ile-145. The Extracellular segment spans residues Ser-146–Phe-157. A helical transmembrane segment spans residues Asp-158 to Gly-176. Topologically, residues Val-177–His-196 are cytoplasmic. A helical transmembrane segment spans residues Ile-197–Phe-216. Over Ser-217–Trp-302 the chain is Extracellular. Residue Glu-285 coordinates Ca(2+). Residues Glu-303 to Ser-327 traverse the membrane as a helical segment. At Gly-328–Gln-434 the chain is on the cytoplasmic side. The II repeat unit spans residues Asn-420–Leu-667. The chain crosses the membrane as a helical span at residues Ala-435–Glu-454. Topologically, residues His-455–Glu-467 are extracellular. The helical transmembrane segment at Tyr-468–Ser-487 threads the bilayer. The Cytoplasmic segment spans residues Leu-488–Ser-496. A helical membrane pass occupies residues Leu-497–Leu-515. Residues Thr-516–Gly-525 lie on the Extracellular side of the membrane. Residues Val-526–Trp-544 traverse the membrane as a helical segment. The Cytoplasmic segment spans residues His-545 to Ser-563. The helical transmembrane segment at Leu-564–Phe-583 threads the bilayer. Topologically, residues Gly-584–Val-639 are extracellular. Glu-617 contacts Ca(2+). The helical transmembrane segment at Ala-640–Val-664 threads the bilayer. The Cytoplasmic segment spans residues Asp-665–Arg-785. The stretch at Asn-777–Phe-1059 is one III repeat. A helical transmembrane segment spans residues Leu-786–Ala-809. Residues Glu-810–Phe-826 are Extracellular-facing. The chain crosses the membrane as a helical span at residues Asp-827–Gly-846. Topologically, residues Phe-847–Phe-854 are cytoplasmic. Residues Cys-855–Asn-877 traverse the membrane as a helical segment. Over Ser-878–Lys-885 the chain is Extracellular. Residues Ile-886–Asn-900 form a helical membrane-spanning segment. The Cytoplasmic segment spans residues Arg-901–Asn-921. The helical transmembrane segment at Ile-922–Phe-941 threads the bilayer. The Extracellular segment spans residues Lys-942 to Pro-1030. Positions Arg-979–Lys-1068 are dihydropyridine binding. Glu-1005 serves as a coordination point for Ca(2+). The chain crosses the membrane as a helical span at residues Ile-1031 to Val-1055. The Cytoplasmic segment spans residues Ile-1056–Ser-1110. The stretch at His-1096 to Phe-1370 is one IV repeat. Residues Phe-1111–Lys-1129 traverse the membrane as a helical segment. Topologically, residues Phe-1130–Ala-1143 are extracellular. The chain crosses the membrane as a helical span at residues Leu-1144–Phe-1163. The Cytoplasmic portion of the chain corresponds to Arg-1164 to Ala-1172. Residues Trp-1173 to Ser-1191 traverse the membrane as a helical segment. The Extracellular segment spans residues Glu-1192 to Ser-1219. The chain crosses the membrane as a helical span at residues Ile-1220–Gly-1238. Over Glu-1239–Tyr-1257 the chain is Cytoplasmic. Residues Val-1258–Phe-1277 traverse the membrane as a helical segment. The Extracellular portion of the chain corresponds to Gly-1278 to Ala-1343. Residues Lys-1327–Ile-1389 are dihydropyridine binding. The tract at residues Asn-1337 to Ser-1378 is phenylalkylamine binding. Residues Phe-1344 to Phe-1362 form a helical membrane-spanning segment. Residues Val-1363–Phe-1687 are Cytoplasmic-facing.

Belongs to the calcium channel alpha-1 subunit (TC 1.A.1.11) family. In terms of tissue distribution, predominantly expressed in the larval body wall musculature. In adults, highest expression in thorax followed by head and at a lower extent by abdomen.

It localises to the membrane. Its function is as follows. Voltage-sensitive calcium channels (VSCC) mediate the entry of calcium ions into excitable cells and are also involved in a variety of calcium-dependent processes, including muscle contraction, hormone or neurotransmitter release, gene expression, cell motility, cell division and cell death. MDL-alpha1 encodes a dihydropyridine- and diltiazem-sensitive current in larval body wall muscle. The protein is Muscle calcium channel subunit alpha-1 of Musca domestica (House fly).